Here is a 256-residue protein sequence, read N- to C-terminus: Nuclear shuttle protein (256 aa).

Residues 21 to 42 (YQGFRRTAIVTRHDGKRRQHQS) carry the Bipartite nuclear localization signal motif. Positions 81–96 (QLGKIEPNRCRSYIKL) match the Nuclear localization signal motif. The interaction with Arabidopsis thaliana NSI protein stretch occupies residues 150-187 (ELFGARINSHGNLAVMPSLKDRFYIRHLLKRVLSVDKD).

This sequence belongs to the begomovirus nuclear shuttle protein family. As to quaternary structure, binds to single-stranded and double-stranded viral DNA. Interacts with the host nuclear shuttle interacting (NSI) protein. This interaction may allow NSP to recruit NSI monomers to the viral genome and thus regulate nuclear export of viral genome by NSP.

The protein resides in the host nucleus. It localises to the host cytoplasm. Its subcellular location is the host cell membrane. In terms of biological role, binds to the genomic viral ssDNA, shuttles it into and out of the cell nucleus. Begomoviruses use 2 proteins to transport their DNA from cell to cell. The nuclear shuttle protein (NSP) shuttles it between nucleus and cytoplasm and the movement protein (MP) probably transports the DNA-NSP complex to the cell periphery and facilitates movement across the cell wall. The sequence is that of Nuclear shuttle protein from Macroptilium lathyroides (Lima bean).